The primary structure comprises 199 residues: Crossover junction endodeoxyribonuclease RuvC (199 aa).

Residues D7, E68, and D141 contribute to the active site. Residues D7, E68, and D141 each contribute to the Mg(2+) site.

Belongs to the RuvC family. As to quaternary structure, homodimer which binds Holliday junction (HJ) DNA. The HJ becomes 2-fold symmetrical on binding to RuvC with unstacked arms; it has a different conformation from HJ DNA in complex with RuvA. In the full resolvosome a probable DNA-RuvA(4)-RuvB(12)-RuvC(2) complex forms which resolves the HJ. It depends on Mg(2+) as a cofactor.

Its subcellular location is the cytoplasm. It catalyses the reaction Endonucleolytic cleavage at a junction such as a reciprocal single-stranded crossover between two homologous DNA duplexes (Holliday junction).. The RuvA-RuvB-RuvC complex processes Holliday junction (HJ) DNA during genetic recombination and DNA repair. Endonuclease that resolves HJ intermediates. Cleaves cruciform DNA by making single-stranded nicks across the HJ at symmetrical positions within the homologous arms, yielding a 5'-phosphate and a 3'-hydroxyl group; requires a central core of homology in the junction. The consensus cleavage sequence is 5'-(A/T)TT(C/G)-3'. Cleavage occurs on the 3'-side of the TT dinucleotide at the point of strand exchange. HJ branch migration catalyzed by RuvA-RuvB allows RuvC to scan DNA until it finds its consensus sequence, where it cleaves and resolves the cruciform DNA. This Saccharopolyspora erythraea (strain ATCC 11635 / DSM 40517 / JCM 4748 / NBRC 13426 / NCIMB 8594 / NRRL 2338) protein is Crossover junction endodeoxyribonuclease RuvC.